Reading from the N-terminus, the 359-residue chain is Cytosolic sulfotransferase 15 (359 aa).

Position 101–106 (101–106 (KSGTTW)) interacts with 3'-phosphoadenylyl sulfate. Histidine 168 serves as the catalytic Proton acceptor. Residues arginine 190, serine 198, tyrosine 256, and 322 to 324 (RKG) each bind 3'-phosphoadenylyl sulfate.

It belongs to the sulfotransferase 1 family. In terms of tissue distribution, expressed in leaves.

It localises to the cytoplasm. It catalyses the reaction a 12-hydroxyjasmonate + 3'-phosphoadenylyl sulfate = a 12-sulfojasmonate + adenosine 3',5'-bisphosphate + H(+). Its function is as follows. Sulfotransferase that utilizes 3'-phospho-5'-adenylyl sulfate (PAPS) as sulfonate donor to specifically catalyze the sulfate conjugation of hydroxyjasmonates, with a preference for 12-hydroxyjasmonate over 11-hydroxyjasmonate. No activity with 12-hydroxyjasmonic acid methyl ester, cucurbic acid, 7-iso-cucurbic acid, 6-epi-cucurbic acid, 6-epi-7-iso-cucurbic acid and their methyl esters, prostaglandin E2, arachidonyl alcohol and 11-eicosenol. In Arabidopsis thaliana (Mouse-ear cress), this protein is Cytosolic sulfotransferase 15 (SOT15).